The following is a 258-amino-acid chain: UPF0246 protein VP0504 (258 aa).

It belongs to the UPF0246 family.

This is UPF0246 protein VP0504 from Vibrio parahaemolyticus serotype O3:K6 (strain RIMD 2210633).